Here is a 3930-residue protein sequence, read N- to C-terminus: Hybrid PKS-NRPS synthetase apdA (3930 aa).

Positions 2–440 constitute a Ketosynthase family 3 (KS3) domain; that stretch reads QDLIAIVGSA…GTNAHAIIEG (439 aa). Catalysis depends on for beta-ketoacyl synthase activity residues Cys176, His313, and His361. Residues 557-879 form a malonyl-CoA:ACP transacylase (MAT) domain region; that stretch reads IFTGQGAQWA…MRRGDNEIEA (323 aa). An N-terminal hotdog fold region spans residues 948-1085; sequence HELLGRRVPD…GRLIINYGDP (138 aa). The tract at residues 948-1251 is dehydratase (DH) domain; the sequence is HELLGRRVPD…SMKSMSEPQP (304 aa). The PKS/mFAS DH domain maps to 948–1252; that stretch reads HELLGRRVPD…MKSMSEPQPE (305 aa). The active-site Proton acceptor; for dehydratase activity is the His980. The C-terminal hotdog fold stretch occupies residues 1100 to 1252; the sequence is NVPVDMGRFY…MKSMSEPQPE (153 aa). Asp1159 serves as the catalytic Proton donor; for dehydratase activity. Positions 1389-1588 are methyltransferase (MT) domain; sequence QDDMLNRFYM…FSGLDCLAPD (200 aa). Residues 2088–2229 are ketoreductase (KR) domain; sequence ATYLLAGMTG…SLASIIGNAA (142 aa). The Carrier 1 domain occupies 2326–2403; it reads AVIPIVQEAF…QICEDAVRQF (78 aa). Ser2363 bears the O-(pantetheine 4'-phosphoryl)serine mark. Disordered regions lie at residues 2414–2433 and 2444–2494; these read VAPNMTEKPETKSHPSSNAT and DAAN…VDAD. Positions 2445–2473 are enriched in low complexity; sequence AANGDYESSSQGDDSRGNSSSSSSHTSPS. A condensation (C) domain region spans residues 2509–2937; sequence PASFAQSRLW…SLPVNQLPVT (429 aa). The interval 2971-3371 is adenylation (A) (KR) domain; that stretch reads KSFPEETAIK…GTLIFMGRMD (401 aa). A reductase (RED) domain region spans residues 2971–3371; it reads KSFPEETAIK…GTLIFMGRMD (401 aa). The region spanning 3493-3572 is the Carrier 2 domain; it reads RHLSLAEGEL…QMARRISRRK (80 aa). The residue at position 3532 (Ser3532) is an O-(pantetheine 4'-phosphoryl)serine.

It in the C-terminal section; belongs to the NRP synthetase family.

Its pathway is secondary metabolite biosynthesis. Its function is as follows. Hybrid PKS-NRPS synthetase; part of the gene cluster that mediates the biosynthesis of aspyridones. The polyketide-amino acid backbone preaspyridone A is first assembled by the PKS-NRPS hybrid apdA. The assembly of preaspyridone A is initiated by loading of malonyl-CoA onto apdA, followed by decarboxylation to yield the acetyl starter unit. The growing polyketide chain then elongates into a tetraketide. The adpA PKS module catalyzes three Claisen condensations, as well as beta-keto processing and methylation. Alpha-methylation step during polyketide synthesis is a prerequisite and a key checkpoint for chain transfer between PKS and NRPS modules. The downstream NRPS module contains the condensation (C), adenylation (A), and thiolation (T) domains and catalyzes the incorporation of tyrosine via the formation of the L-tyrosinyl-thioester and the amide linkage between L-tyrosinyl-thioester and the tetraketide. The bimodular assembly line is terminated with a reductase (R) domain that facilitates formation and release of the tetramic acid product. Because apdA lacks a designated enoylreductase (ER) domain, the required activity is provided the enoyl reductase apdC. ApdC appears to operate with different stereoselectivity in different PKS cycle. Combined with apdC, apdA is proposed to synthesize preaspyridone A via about 20 enzymatic steps. A number of oxidative steps performed successively by the cytochrome P450 monooxygenases apdE and apdB are required for the conversion of preaspyridone A to aspyridone A. The cytochrome P450 monooxygenase apdE is responsible for the oxidative dephenylation of preaspyridone A. Finally, the predicted FAD-dependent monooxygenase apdD and the acyl-CoA dehydrogenase apdG may be involved in the transformation of aspyridone A into aspyridone B. In Emericella nidulans (strain FGSC A4 / ATCC 38163 / CBS 112.46 / NRRL 194 / M139) (Aspergillus nidulans), this protein is Hybrid PKS-NRPS synthetase apdA.